A 157-amino-acid chain; its full sequence is S-ribosylhomocysteine lyase (157 aa).

Fe cation contacts are provided by H54, H58, and C126.

The protein belongs to the LuxS family. Homodimer. The cofactor is Fe cation.

It catalyses the reaction S-(5-deoxy-D-ribos-5-yl)-L-homocysteine = (S)-4,5-dihydroxypentane-2,3-dione + L-homocysteine. In terms of biological role, involved in the synthesis of autoinducer 2 (AI-2) which is secreted by bacteria and is used to communicate both the cell density and the metabolic potential of the environment. The regulation of gene expression in response to changes in cell density is called quorum sensing. Catalyzes the transformation of S-ribosylhomocysteine (RHC) to homocysteine (HC) and 4,5-dihydroxy-2,3-pentadione (DPD). The protein is S-ribosylhomocysteine lyase of Bacillus pumilus (strain SAFR-032).